A 213-amino-acid chain; its full sequence is Redox-sensing transcriptional repressor Rex (213 aa).

Residues 18 to 57 (LYYRFVNTLKSKGIDRVNSKAISEGLNIDSATIRRDFSYF) constitute a DNA-binding region (H-T-H motif). An NAD(+)-binding site is contributed by 92 to 97 (GVGNLG).

Belongs to the transcriptional regulatory Rex family. Homodimer.

The protein localises to the cytoplasm. Modulates transcription in response to changes in cellular NADH/NAD(+) redox state. The protein is Redox-sensing transcriptional repressor Rex of Staphylococcus saprophyticus subsp. saprophyticus (strain ATCC 15305 / DSM 20229 / NCIMB 8711 / NCTC 7292 / S-41).